Consider the following 120-residue polypeptide: Transcription elongation factor 1 homolog (120 aa).

Zn(2+) contacts are provided by cysteine 25, cysteine 28, cysteine 49, and cysteine 52. A compositionally biased stretch (acidic residues) spans 84-110; sequence EDDVVQEEEEEVEEEEEEEEEEDDEDD. Residues 84–120 are disordered; sequence EDDVVQEEEEEVEEEEEEEEEEDDEDDHVSVKRKYNF.

This sequence belongs to the ELOF1 family.

Its subcellular location is the nucleus. Its function is as follows. Transcription elongation factor implicated in the maintenance of proper chromatin structure in actively transcribed regions. The sequence is that of Transcription elongation factor 1 homolog from Arabidopsis thaliana (Mouse-ear cress).